Consider the following 67-residue polypeptide: (2R)-sulfolactate sulfo-lyase subunit alpha (67 aa).

In terms of assembly, (2R)-sulfolactate sulfo-lyase is composed of a SuyA and a SuyB subunit.

The protein localises to the cytoplasm. The enzyme catalyses (2R)-3-sulfolactate = sulfite + pyruvate + H(+). Functionally, together with SuyB, desulfonates sulfolactate to pyruvate and sulfite. The chain is (2R)-sulfolactate sulfo-lyase subunit alpha (suyA) from Paracoccus pantotrophus (Thiosphaera pantotropha).